The following is a 643-amino-acid chain: MSSHVPSFLRGTPDMTAHGGDGKSRNVAGLMLAAIGVVFGDIGTSPLYAMKETFSGPHAVAMDKGNILGVLSLVFWAITIIVSFKYVIIIMRADNRGEGGSLALLALVSHAAESNRRLSLMVSALGIFAAALFYGDSIITPAISVLSAVEGLQVAAPHLEQWVVPLTIVILFVLFAIQSHGTDLVGKMFGPVMLVWFLTLAILGIRNLSHAPSVLAALSPHYAISFLFREGWHAFLALGSVVLAVTGAEALYTDMGHFGRLPIRLAWYLLVLPALILNYFGQGALLIYNPEAIANPFFNLAPASLALPLVILATLATVIASQAVISGAFSVTRQAIQLGFLPRMEIIHTSEEEMGQIYLPFVNWLLMCMVMVLVVGFKTSSNLAAAYGVAVTGTMVIDALLVGTVMLLIWKWNPRKVKWLIGGFLVVDLAFFLANSIKIPDGGWFPLVVGGLLFTILTTWKDGRKRLLARLKADALPVEDFLASLSDRVPRVPGTAVFLTGTSEGVPIALLHNMKHNKIVHERVVLLTVIVEEVPFVPEERRLENRLLAPNFHRVFLRYGFMESPNIPKALAHARTDQLGFFYEPMSVSYFVSRETLLPTEKPGLRGLRDTLFATLARMATSAMDFFHLPSNRVVELGSQIEI.

The tract at residues 1-20 (MSSHVPSFLRGTPDMTAHGG) is disordered. The next 12 membrane-spanning stretches (helical) occupy residues 27-47 (VAGL…TSPL), 70-90 (VLSL…VIII), 120-140 (LMVS…SIIT), 157-177 (PHLE…LFAI), 185-205 (VGKM…ILGI), 231-251 (GWHA…AEAL), 267-287 (WYLL…ALLI), 300-320 (LAPA…TVIA), 357-377 (IYLP…VVGF), 389-409 (VAVT…MLLI), 419-439 (WLIG…SIKI), and 440-460 (PDGG…LTTW).

Belongs to the HAK/KUP transporter (TC 2.A.72) family.

Its subcellular location is the cell inner membrane. It carries out the reaction K(+)(in) + H(+)(in) = K(+)(out) + H(+)(out). Transport of potassium into the cell. Likely operates as a K(+):H(+) symporter. The sequence is that of Probable potassium transport system protein Kup 2 from Paramagnetospirillum magneticum (strain ATCC 700264 / AMB-1) (Magnetospirillum magneticum).